A 180-amino-acid polypeptide reads, in one-letter code: CD-NTase/cGAS isopeptidase (180 aa).

In terms of domain architecture, MPN spans 33 to 165 (IVISSSTIEQ…AGSYSLSASV (133 aa)). Catalysis depends on Glu-54, which acts as the Proton donor/acceptor. The Zn(2+) site is built by His-115, His-117, and Asp-128.

This sequence belongs to the peptidase M67B family. Cap3 isopeptidase subfamily.

Functionally, metalloprotease priming reversal component of a CBASS antivirus system. CBASS (cyclic oligonucleotide-based antiphage signaling system) provides immunity against bacteriophages. The CD-NTase protein (CdnD) synthesizes cyclic nucleotides in response to infection; these serve as specific second messenger signals. The signals activate a diverse range of effectors, leading to bacterial cell death and thus abortive phage infection. A type II-C(AAG) CBASS system. Reverses the primed state of DncV, the CD-NTase. Cleaves a CdnD-GFP (green fluorescent protein) fusion protein precisely at the C-terminus of CdnD. Overexpression decreases the efficacy of CBASS protection against phage T2. Antagonism of phage defense upon overexpression is CBASS-system specific, Cap3 from this bacteria only antagonizes its cognate CBASS system and not that of C.freundii, E.coli or V.cholerae. In terms of biological role, protects E.coli against phage T2 infection. When the cdnD-cap2-cap3-cap4 operon is introduced in E.coli there is a more than 10(3) decrease in the efficiency of T2 plaque formation. The operon does not protect against phage T5 and only about 10-fold against T7. The chain is CD-NTase/cGAS isopeptidase from Enterobacter hormaechei subsp. hoffmannii (strain UCI 50).